The following is a 146-amino-acid chain: Large ribosomal subunit protein uL13 (146 aa).

Belongs to the universal ribosomal protein uL13 family. As to quaternary structure, part of the 50S ribosomal subunit.

This protein is one of the early assembly proteins of the 50S ribosomal subunit, although it is not seen to bind rRNA by itself. It is important during the early stages of 50S assembly. This chain is Large ribosomal subunit protein uL13, found in Mycoplasma genitalium (strain ATCC 33530 / DSM 19775 / NCTC 10195 / G37) (Mycoplasmoides genitalium).